Consider the following 85-residue polypeptide: Protein MC005 (85 aa).

As to quaternary structure, interacts with host IKBKG; this interaction prevents NF-kappa-B activation.

The protein localises to the host cytoplasm. In terms of biological role, plays a role in the inhibition of the host NF-kappa-B pathway by preventing ubiquitin binding-dependent regulation of host IKBKB activation by IKBKG/NEMO. The polypeptide is Protein MC005 (MC005L) (Molluscum contagiosum virus subtype 1 (MOCV)).